The chain runs to 119 residues: Beta-2-microglobulin (119 aa).

Positions 1 to 20 are cleaved as a signal peptide; sequence MARTVATFFLMLVSLACLDA. One can recognise an Ig-like C1-type domain in the interval 25-114; sequence PQVQVYTRHP…VTLKEPKVVT (90 aa). A disulfide bridge connects residues Cys45 and Cys100.

It belongs to the beta-2-microglobulin family. Heterodimer of an alpha chain and a beta chain. Beta-2-microglobulin is the beta-chain of major histocompatibility complex class I molecules.

It is found in the secreted. In terms of biological role, component of the class I major histocompatibility complex (MHC). Involved in the presentation of peptide antigens to the immune system. The sequence is that of Beta-2-microglobulin (B2M) from Sigmodon hispidus (Hispid cotton rat).